We begin with the raw amino-acid sequence, 329 residues long: MWLQKQWYKARLHPLLFLLTPLSLVFWLVTNLRRSFYALGLMPRYKADVPVIVVGNISVGGTGKTPMVVALSQWLKDEGWNPGIISRGYGAKGPFPYEVLESDSPEKAGDEPLLMRRRTGCPVVIAPKRAQAAKLMAEQHPKVDVIICDDGLQHYALKRDIELIMIDAERGTGNGWLLPAGPLREGPWRLKGADWVISNYGRHAFARHVVDVEPGNWYRVDNNEQVALKTESKFNAVAGIGYPQRFFNSLIEQGIELENSQSFADHHAFSQQDFSNLASNPILMTEKDAGKCQSFAQADWYYQTIEAKLPEVMKTNLLAELERKKNGHR.

58–65 (SVGGTGKT) contacts ATP.

This sequence belongs to the LpxK family.

The catalysed reaction is a lipid A disaccharide + ATP = a lipid IVA + ADP + H(+). It functions in the pathway glycolipid biosynthesis; lipid IV(A) biosynthesis; lipid IV(A) from (3R)-3-hydroxytetradecanoyl-[acyl-carrier-protein] and UDP-N-acetyl-alpha-D-glucosamine: step 6/6. In terms of biological role, transfers the gamma-phosphate of ATP to the 4'-position of a tetraacyldisaccharide 1-phosphate intermediate (termed DS-1-P) to form tetraacyldisaccharide 1,4'-bis-phosphate (lipid IVA). The sequence is that of Tetraacyldisaccharide 4'-kinase from Idiomarina loihiensis (strain ATCC BAA-735 / DSM 15497 / L2-TR).